The chain runs to 400 residues: 1-deoxy-D-xylulose 5-phosphate reductoisomerase (400 aa).

Residues T17, G18, S19, I20, and N131 each contribute to the NADPH site. A 1-deoxy-D-xylulose 5-phosphate-binding site is contributed by K132. E133 provides a ligand contact to NADPH. D157 is a Mn(2+) binding site. 1-deoxy-D-xylulose 5-phosphate contacts are provided by S158, E159, S188, and H211. E159 contacts Mn(2+). An NADPH-binding site is contributed by G217. 1-deoxy-D-xylulose 5-phosphate-binding residues include S224, N229, K230, and E233. E233 contacts Mn(2+).

This sequence belongs to the DXR family. It depends on Mg(2+) as a cofactor. The cofactor is Mn(2+).

The enzyme catalyses 2-C-methyl-D-erythritol 4-phosphate + NADP(+) = 1-deoxy-D-xylulose 5-phosphate + NADPH + H(+). It participates in isoprenoid biosynthesis; isopentenyl diphosphate biosynthesis via DXP pathway; isopentenyl diphosphate from 1-deoxy-D-xylulose 5-phosphate: step 1/6. Catalyzes the NADPH-dependent rearrangement and reduction of 1-deoxy-D-xylulose-5-phosphate (DXP) to 2-C-methyl-D-erythritol 4-phosphate (MEP). The chain is 1-deoxy-D-xylulose 5-phosphate reductoisomerase from Pseudomonas putida (strain ATCC 47054 / DSM 6125 / CFBP 8728 / NCIMB 11950 / KT2440).